The sequence spans 295 residues: Probable cell division protein WhiA (295 aa).

The segment at residues 262–293 is a DNA-binding region (H-T-H motif); it reads SLRELGKKLNLTKSQIYSKLKRIIKIAERFGD.

Belongs to the WhiA family.

Involved in cell division and chromosome segregation. The chain is Probable cell division protein WhiA from Thermotoga maritima (strain ATCC 43589 / DSM 3109 / JCM 10099 / NBRC 100826 / MSB8).